The sequence spans 269 residues: Tryptophan synthase alpha chain (269 aa).

Catalysis depends on proton acceptor residues glutamate 49 and aspartate 60.

This sequence belongs to the TrpA family. Tetramer of two alpha and two beta chains.

It catalyses the reaction (1S,2R)-1-C-(indol-3-yl)glycerol 3-phosphate + L-serine = D-glyceraldehyde 3-phosphate + L-tryptophan + H2O. It functions in the pathway amino-acid biosynthesis; L-tryptophan biosynthesis; L-tryptophan from chorismate: step 5/5. Its function is as follows. The alpha subunit is responsible for the aldol cleavage of indoleglycerol phosphate to indole and glyceraldehyde 3-phosphate. The protein is Tryptophan synthase alpha chain of Acidovorax sp. (strain JS42).